The sequence spans 256 residues: Ubiquinone/menaquinone biosynthesis C-methyltransferase UbiE (256 aa).

S-adenosyl-L-methionine contacts are provided by residues T79, D100, and 128–129 (DA).

The protein belongs to the class I-like SAM-binding methyltransferase superfamily. MenG/UbiE family.

It carries out the reaction a 2-demethylmenaquinol + S-adenosyl-L-methionine = a menaquinol + S-adenosyl-L-homocysteine + H(+). The enzyme catalyses a 2-methoxy-6-(all-trans-polyprenyl)benzene-1,4-diol + S-adenosyl-L-methionine = a 5-methoxy-2-methyl-3-(all-trans-polyprenyl)benzene-1,4-diol + S-adenosyl-L-homocysteine + H(+). It participates in quinol/quinone metabolism; menaquinone biosynthesis; menaquinol from 1,4-dihydroxy-2-naphthoate: step 2/2. It functions in the pathway cofactor biosynthesis; ubiquinone biosynthesis. In terms of biological role, methyltransferase required for the conversion of demethylmenaquinol (DMKH2) to menaquinol (MKH2) and the conversion of 2-polyprenyl-6-methoxy-1,4-benzoquinol (DDMQH2) to 2-polyprenyl-3-methyl-6-methoxy-1,4-benzoquinol (DMQH2). This Pseudomonas syringae pv. tomato (strain ATCC BAA-871 / DC3000) protein is Ubiquinone/menaquinone biosynthesis C-methyltransferase UbiE.